The chain runs to 236 residues: CD81 protein (236 aa).

Residues 1 to 12 (MGVEGCTKCIKY) lie on the Cytoplasmic side of the membrane. Residues 13–33 (LLFVFNFVFWLAGGVILGVAL) traverse the membrane as a helical segment. The Extracellular portion of the chain corresponds to 34 to 63 (WLRHDPQTTNLLYLELGDKPAPNTFYVGIY). Residues 64–84 (ILIAVGAVMMFVGFLGCYGAI) form a helical membrane-spanning segment. The Cytoplasmic segment spans residues 85–89 (QESQC). A helical membrane pass occupies residues 90 to 112 (LLGTFFTCLVILFACEVAAGIWG). The Extracellular portion of the chain corresponds to 113–201 (FVNKDQIAKD…QKIDELFSGK (89 aa)). Disulfide bonds link cysteine 156–cysteine 190 and cysteine 157–cysteine 175. The helical transmembrane segment at 202 to 224 (LYLIGIAAIVVAVIMIFEMILSM) threads the bilayer. Glutamate 219 contributes to the cholesterol binding site. Residues 225 to 236 (VLCCGIRNSSVY) are Cytoplasmic-facing.

This sequence belongs to the tetraspanin (TM4SF) family. Homodimer. Part of a complex composed of CD19, CR2/CD21, CD81 and IFITM1/CD225 in the membrane of mature B cells. Interacts (via the second extracellular domain) with CD19; this interaction is initiated early during biosynthesis in the ER and enables trafficking of only properly folded CD19. Part of a complex that includes MHC class II/HLA-DR molecules and IFITM1. Interacts with IFITM1. Interacts with IFITM2 and IFITM3. Part of integrin-tetraspanin complex composed of CD9, CD81, beta-1 and beta-2 integrins in the membrane of monocyte/macrophages. Interacts (via the second extracellular domain) with integrin ITGAV:ITGB3. Interacts with CD247/CD3 zeta, ICAM1 and CD9 at the immune synapse on T cell membrane. Part of a GPCR-tetraspanin complex consisting at least of ADGRG1, CD81, possibly CD9, and GNA11 in which CD81 enhances the association of ADGRG1 with GNA11. Part of a complex composed of CD9, CD81, PTGFRN and IGSF8. Interacts directly with IGSF8. Interacts with CD53 and SCIMP. Interacts with SAMHD1 (via its C-terminus). Interacts with glypican GPC3 and with the transcriptional repressor HHEX; binding to GPC3 decreases the availability of free CD81 for binding to HHEX, resulting in nuclear translocation of HHEX and transcriptional repression. Interacts with CLDN1. Interacts with CLDN6 and CLDN9. In terms of processing, not glycosylated. Likely constitutively palmitoylated at low levels. Protein palmitoylation is up-regulated upon coligation of BCR and CD9-C2R-CD81 complexes in lipid rafts.

The protein localises to the cell membrane. It is found in the basolateral cell membrane. Structural component of specialized membrane microdomains known as tetraspanin-enriched microdomains (TERMs), which act as platforms for receptor clustering and signaling. Essential for trafficking and compartmentalization of CD19 receptor on the surface of activated B cells. Upon initial encounter with microbial pathogens, enables the assembly of CD19-CR2/CD21 and B cell receptor (BCR) complexes at signaling TERMs, lowering the threshold dose of antigen required to trigger B cell clonal expansion and antibody production. In T cells, facilitates the localization of CD247/CD3 zeta at antigen-induced synapses with B cells, providing for costimulation and polarization toward T helper type 2 phenotype. Present in MHC class II compartments, may also play a role in antigen presentation. Can act both as positive and negative regulator of homotypic or heterotypic cell-cell fusion processes. Positively regulates sperm-egg fusion and may be involved in acrosome reaction. In myoblasts, associates with CD9 and PTGFRN and inhibits myotube fusion during muscle regeneration. In macrophages, associates with CD9 and beta-1 and beta-2 integrins, and prevents macrophage fusion into multinucleated giant cells specialized in ingesting complement-opsonized large particles. Also prevents the fusion of mononuclear cell progenitors into osteoclasts in charge of bone resorption. May regulate the compartmentalization of enzymatic activities. In T cells, defines the subcellular localization of dNTPase SAMHD1 and permits its degradation by the proteasome, thereby controlling intracellular dNTP levels. Also involved in cell adhesion and motility. Positively regulates integrin-mediated adhesion of macrophages, particularly relevant for the inflammatory response in the lung. This chain is CD81 protein (CD81), found in Saguinus oedipus (Cotton-top tamarin).